Here is a 947-residue protein sequence, read N- to C-terminus: ATP-dependent RNA helicase DDX42 (947 aa).

The span at 1–18 (MNWNKGGSGNKRGFGFGG) shows a compositional bias: gly residues. Disordered regions lie at residues 1–54 (MNWN…NQLP), 68–114 (EENS…PLEA), and 176–200 (NLEYDSDGNPIAPTTKRIIDPLPPI). The span at 34-54 (VSHSAFQSASSKYGSTSNQLP) shows a compositional bias: polar residues. The segment covering 68 to 81 (EENSYFDDEEEDSS) has biased composition (acidic residues). Positions 112–152 (LEAFMAEVEDQAAKDMRKLEERDKEKANARGIRDDIEEEDD) form a coiled coil. The Q motif motif lies at 250–278 (SSFAHFGFDEQLLHQIRKSEYTQPTPIQC). Residues 281-456 (IPVALSGRDM…RDILVDPIRV (176 aa)) enclose the Helicase ATP-binding domain. Position 294 to 301 (294 to 301 (AKTGSGKT)) interacts with ATP. A DEAD box motif is present at residues 404-407 (DEAD). Positions 484 to 629 (WLTRRLVEFT…YVSKELLDLA (146 aa)) constitute a Helicase C-terminal domain. Disordered regions lie at residues 731 to 754 (SAGSLSSVPSAHPPSGKLPAEAAP) and 797 to 947 (GASA…RWDS). Residues 805 to 929 (GGRERHSDSK…RKEGTREAKT (125 aa)) are compositionally biased toward basic and acidic residues. Over residues 938-947 (PKRKKSRWDS) the composition is skewed to basic residues.

It belongs to the DEAD box helicase family. DDX42 subfamily. In terms of assembly, transient component of the SF3B subcomplex of the 17S U2 SnRNP complex.

The protein localises to the cytoplasm. The protein resides in the nucleus. The enzyme catalyses ATP + H2O = ADP + phosphate + H(+). Functionally, ATP-dependent RNA helicase that binds to partially double-stranded RNAs (dsRNAs) in order to unwind RNA secondary structures. Unwinding is promoted in the presence of single-strand binding proteins. Also mediates RNA duplex formation thereby displacing the single-strand RNA binding protein. ATP and ADP modulate its activity: ATP binding and hydrolysis by DDX42 triggers RNA strand separation, whereas the ADP-bound form of the protein triggers annealing of complementary RNA strands. Required for assembly of the 17S U2 SnRNP complex of the spliceosome, a large ribonucleoprotein complex that removes introns from transcribed pre-mRNAs: DDX42 associates transiently with the SF3B subcomplex of the 17S U2 SnRNP complex and is released after fulfilling its role in the assembly of 17S U2 SnRNP. This is ATP-dependent RNA helicase DDX42 (ddx42) from Xenopus laevis (African clawed frog).